Reading from the N-terminus, the 440-residue chain is Ribulose bisphosphate carboxylase large chain (440 aa).

Lys4 carries the post-translational modification N6,N6,N6-trimethyllysine. 2 residues coordinate substrate: Asn113 and Thr163. The Proton acceptor role is filled by Lys165. Substrate is bound at residue Lys167. Lys191, Asp193, and Glu194 together coordinate Mg(2+). Lys191 carries the N6-carboxylysine modification. His284 (proton acceptor) is an active-site residue. The substrate site is built by Arg285, His317, and Ser369.

The protein belongs to the RuBisCO large chain family. Type I subfamily. As to quaternary structure, heterohexadecamer of 8 large chains and 8 small chains; disulfide-linked. The disulfide link is formed within the large subunit homodimers. Mg(2+) serves as cofactor. Post-translationally, the disulfide bond which can form in the large chain dimeric partners within the hexadecamer appears to be associated with oxidative stress and protein turnover.

The protein localises to the plastid. It localises to the chloroplast. The enzyme catalyses 2 (2R)-3-phosphoglycerate + 2 H(+) = D-ribulose 1,5-bisphosphate + CO2 + H2O. It catalyses the reaction D-ribulose 1,5-bisphosphate + O2 = 2-phosphoglycolate + (2R)-3-phosphoglycerate + 2 H(+). Its function is as follows. RuBisCO catalyzes two reactions: the carboxylation of D-ribulose 1,5-bisphosphate, the primary event in carbon dioxide fixation, as well as the oxidative fragmentation of the pentose substrate in the photorespiration process. Both reactions occur simultaneously and in competition at the same active site. In Matteuccia struthiopteris (European ostrich fern), this protein is Ribulose bisphosphate carboxylase large chain.